The chain runs to 466 residues: Probable agmatine/putrescine antiporter AguD (466 aa).

The next 12 helical transmembrane spans lie at Phe8–Ala28, Val30–Leu50, Ala85–Pro105, Ile120–Val140, Val144–Leu164, Leu192–Ala212, Ile226–Val246, Trp273–Trp293, Trp325–Leu345, Leu350–Phe370, Val398–Leu418, and Thr426–Ile446.

The protein belongs to the amino acid-polyamine-organocation (APC) superfamily. Glutamate:GABA antiporter (GGA) (TC 2.A.3.7) family.

Its subcellular location is the cell membrane. In terms of biological role, probably catalyzes agmatine/putrescine exchange. The chain is Probable agmatine/putrescine antiporter AguD from Lactococcus lactis subsp. lactis (strain IL1403) (Streptococcus lactis).